A 219-amino-acid chain; its full sequence is Uracil-DNA glycosylase (219 aa).

D61 acts as the Proton acceptor in catalysis.

The protein belongs to the uracil-DNA glycosylase (UDG) superfamily. UNG family.

It localises to the cytoplasm. It catalyses the reaction Hydrolyzes single-stranded DNA or mismatched double-stranded DNA and polynucleotides, releasing free uracil.. Excises uracil residues from the DNA which can arise as a result of misincorporation of dUMP residues by DNA polymerase or due to deamination of cytosine. The chain is Uracil-DNA glycosylase from Haemophilus influenzae (strain PittEE).